A 263-amino-acid polypeptide reads, in one-letter code: PDZ domain-containing protein 9 (263 aa).

A PDZ domain is found at 30–109 (QTKLTVGSMG…GTILQIKVYR (80 aa)).

The protein is PDZ domain-containing protein 9 (PDZD9) of Bos taurus (Bovine).